We begin with the raw amino-acid sequence, 552 residues long: Steroid transmembrane transporter SLC22A24 (552 aa).

Helical transmembrane passes span 16 to 36, 146 to 166, 178 to 200, 204 to 226, 234 to 254, 260 to 280, 350 to 370, 380 to 400, 407 to 427, 435 to 455, 474 to 492, and 496 to 516; these read FQICLIAFFCITNILLFPNIV, SMVQSLFMAGSLLGGLIYGHL, LCFLQLAISNTCAAFAPTFLVYC, FLAGFSTMTILGNTFILSLEWTL, IMVLLCSYSVGQMLLGGLAFA, ILQLTVSTPIIVLFLSSWKMV, VFGLCFVRFAITVPFYGLILN, LFQILCGAVTFTARCVSLLTL, ISQILFTFPVGLFILVNTFLP, VVLATLGIGSVSAASNSASVH, VSGRTGAALAPLLMTLMAY, and LPWISYGVFPILAVPVILLLP.

Belongs to the major facilitator (TC 2.A.1) superfamily. Organic cation transporter (TC 2.A.1.19) family. Localized to the kidney. Highly specific expression pattern in the nephron, localized to segment 3 of the proximal tubule.

The protein resides in the cell membrane. The catalysed reaction is estrone 3-sulfate(out) + glutarate(in) = estrone 3-sulfate(in) + glutarate(out). It carries out the reaction 17beta-estradiol 17-O-(beta-D-glucuronate)(out) + glutarate(in) = 17beta-estradiol 17-O-(beta-D-glucuronate)(in) + glutarate(out). The enzyme catalyses taurocholate(out) + glutarate(in) = taurocholate(in) + glutarate(out). It catalyses the reaction 5alpha-androstane-3alpha,17beta-diol 3-O-(beta-D-glucuronate)(out) + glutarate(in) = 5alpha-androstane-3alpha,17beta-diol 3-O-(beta-D-glucuronate)(in) + glutarate(out). The catalysed reaction is glycocholate(out) + glutarate(in) = glycocholate(in) + glutarate(out). It carries out the reaction dehydroepiandrosterone 3-sulfate(out) + glutarate(in) = dehydroepiandrosterone 3-sulfate(in) + glutarate(out). The enzyme catalyses glutarate(in) + succinate(out) = glutarate(out) + succinate(in). Its activity is regulated as follows. Transport is chloride sensitive and transtimulated by glutaric acid. Transport is inhibited by anionic compounds from different chemical classes. Functionally, renal transmembrane organic anion/dicarboxylate exchanger that participates in the reabsorption of conjugated steroids including estradiol-17beta-D-glucuronide (or 17beta-estradiol 17-O-(beta-D-glucuronate)), androstanediol glucuronide (or 5alpha-androstane-3alpha,17beta-diol 3-O-(beta-D-glucuronate)), and estrone 3-sulfate, as well as bile acids taurocholate and glycocholate, driven by an outward gradient of dicarboxylates such as glutarate or succinate. Similar uptake function as Isoform 1. Its function is as follows. Lack of transporter activity. This chain is Steroid transmembrane transporter SLC22A24, found in Homo sapiens (Human).